Here is a 217-residue protein sequence, read N- to C-terminus: UPF0323 lipoprotein HPSH_01205 (217 aa).

An N-terminal signal peptide occupies residues Met-1–Gly-27. Cys-28 carries the N-palmitoyl cysteine lipid modification. Cys-28 carries the S-diacylglycerol cysteine lipid modification. A compositionally biased stretch (polar residues) spans Gln-160–Arg-171. A disordered region spans residues Gln-160–Ser-217. Residues Ser-172–Ser-210 are compositionally biased toward low complexity.

The protein belongs to the UPF0323 family.

Its subcellular location is the cell membrane. This chain is UPF0323 lipoprotein HPSH_01205, found in Helicobacter pylori (strain Shi470).